We begin with the raw amino-acid sequence, 295 residues long: UDP-N-acetylenolpyruvoylglucosamine reductase (295 aa).

The FAD-binding PCMH-type domain maps to K24–G188. R168 is an active-site residue. S217 functions as the Proton donor in the catalytic mechanism. The active site involves E287.

This sequence belongs to the MurB family. The cofactor is FAD.

It localises to the cytoplasm. The enzyme catalyses UDP-N-acetyl-alpha-D-muramate + NADP(+) = UDP-N-acetyl-3-O-(1-carboxyvinyl)-alpha-D-glucosamine + NADPH + H(+). It participates in cell wall biogenesis; peptidoglycan biosynthesis. Functionally, cell wall formation. The polypeptide is UDP-N-acetylenolpyruvoylglucosamine reductase (Rickettsia rickettsii (strain Iowa)).